Consider the following 694-residue polypeptide: Polyribonucleotide nucleotidyltransferase (694 aa).

Positions 486 and 492 each coordinate Mg(2+). Positions 553–612 (PRIETMQIKPTKIASVIGPGGKQIRQIIEETGVQIDVNDLGVVSISASSASAINKAKEII) constitute a KH domain. In terms of domain architecture, S1 motif spans 622-690 (GKTYRGRVTS…EKGQLKLSHK (69 aa)).

This sequence belongs to the polyribonucleotide nucleotidyltransferase family. It depends on Mg(2+) as a cofactor.

The protein localises to the cytoplasm. The enzyme catalyses RNA(n+1) + phosphate = RNA(n) + a ribonucleoside 5'-diphosphate. Its function is as follows. Involved in mRNA degradation. Catalyzes the phosphorolysis of single-stranded polyribonucleotides processively in the 3'- to 5'-direction. This is Polyribonucleotide nucleotidyltransferase from Chlamydia pneumoniae (Chlamydophila pneumoniae).